The following is a 298-amino-acid chain: Beta-soluble NSF attachment protein (298 aa).

It belongs to the SNAP family. In terms of assembly, interacts with PRKCABP, and disrupts the interaction between GRIA2 and PRKCABP, leading to the internalization of GRIA2.

The protein localises to the membrane. In terms of biological role, required for vesicular transport between the endoplasmic reticulum and the Golgi apparatus. In Homo sapiens (Human), this protein is Beta-soluble NSF attachment protein (NAPB).